The following is a 275-amino-acid chain: MAIVKVKPTSPGRRAMVKVVNKNLHQGKPFAALLDSQSSTAGRNNNGRITTRHKGGGHKQHYRIVDFRRTKDGIPAKVERLEYDPNRSANIALVLYADGERRYIIAPKGLTVGQQLMSGSEAPIRAGNTLPIRNIPVGTTIHCIEMLPGKGAQMARSAGTSAMLLAREGVYAQVRLRSGEIRRVHIECRATIGEVGNEEHSLRQIGKAGANRWRGIRPTVRGVAMNPVDHPHGGGEGKTAAGRDPVSPWGTPAKGYRTRSNKRTTTMIVQRRHKR.

Residues aspartate 35 to isoleucine 49 are compositionally biased toward polar residues. Disordered stretches follow at residues aspartate 35 to lysine 59 and alanine 224 to arginine 275. Over residues threonine 50 to lysine 59 the composition is skewed to basic residues.

This sequence belongs to the universal ribosomal protein uL2 family. Part of the 50S ribosomal subunit. Forms a bridge to the 30S subunit in the 70S ribosome.

In terms of biological role, one of the primary rRNA binding proteins. Required for association of the 30S and 50S subunits to form the 70S ribosome, for tRNA binding and peptide bond formation. It has been suggested to have peptidyltransferase activity; this is somewhat controversial. Makes several contacts with the 16S rRNA in the 70S ribosome. The protein is Large ribosomal subunit protein uL2 of Burkholderia orbicola (strain AU 1054).